A 91-amino-acid polypeptide reads, in one-letter code: Small ribosomal subunit protein bS16 (91 aa).

Belongs to the bacterial ribosomal protein bS16 family.

The protein is Small ribosomal subunit protein bS16 of Exiguobacterium sibiricum (strain DSM 17290 / CCUG 55495 / CIP 109462 / JCM 13490 / 255-15).